The chain runs to 391 residues: 4-hydroxy-3-methylbut-2-en-1-yl diphosphate synthase (flavodoxin) (391 aa).

[4Fe-4S] cluster-binding residues include Cys286, Cys289, Cys321, and Glu328.

This sequence belongs to the IspG family. Requires [4Fe-4S] cluster as cofactor.

The enzyme catalyses (2E)-4-hydroxy-3-methylbut-2-enyl diphosphate + oxidized [flavodoxin] + H2O + 2 H(+) = 2-C-methyl-D-erythritol 2,4-cyclic diphosphate + reduced [flavodoxin]. Its pathway is isoprenoid biosynthesis; isopentenyl diphosphate biosynthesis via DXP pathway; isopentenyl diphosphate from 1-deoxy-D-xylulose 5-phosphate: step 5/6. In terms of biological role, converts 2C-methyl-D-erythritol 2,4-cyclodiphosphate (ME-2,4cPP) into 1-hydroxy-2-methyl-2-(E)-butenyl 4-diphosphate. This Corynebacterium diphtheriae (strain ATCC 700971 / NCTC 13129 / Biotype gravis) protein is 4-hydroxy-3-methylbut-2-en-1-yl diphosphate synthase (flavodoxin).